The following is a 2543-amino-acid chain: Highly reducing polyketide synthase PKS2 (2543 aa).

A Ketosynthase family 3 (KS3) domain is found at 4-425 (EPRIAVIGLS…GSNSAILLEG (422 aa)). Residues Cys-174, His-309, and His-349 each act as for beta-ketoacyl synthase activity in the active site. The malonyl-CoA:ACP transacylase (MAT) domain stretch occupies residues 573–902 (VFTGQGAQHA…TYLPTLFRGT (330 aa)). The active-site For malonyltransferase activity is the Ser-662. An N-terminal hotdog fold region spans residues 969-1101 (HPLLGRKISP…GQIEAEMTDM (133 aa)). The PKS/mFAS DH domain maps to 969–1281 (HPLLGRKISP…FRNIGSAEEV (313 aa)). The segment at 969–1283 (HPLLGRKISP…NIGSAEEVID (315 aa)) is dehydratase (DH) domain. The active-site Proton acceptor; for dehydratase activity is the His-1001. The C-terminal hotdog fold stretch occupies residues 1119-1281 (TGLKEHDINA…FRNIGSAEEV (163 aa)). Catalysis depends on Asp-1188, which acts as the Proton donor; for dehydratase activity. The tract at residues 1438 to 1631 (SKVLGYLTEY…LPSRYGTDKP (194 aa)) is methyltransferase (CMet) domain. Residues 1847-2159 (GSPDTIYFQR…SGEHMGKMVI (313 aa)) are enoylreductase (ER) domain. Positions 2184–2359 (ATYLVAGGTR…YTVSIALPVV (176 aa)) are ketoreductase (KR) domain. In terms of domain architecture, Carrier spans 2463 to 2540 (DPLIGLTEAM…ALATEILSQR (78 aa)). Position 2500 is an O-(pantetheine 4'-phosphoryl)serine (Ser-2500).

Its pathway is secondary metabolite biosynthesis. Functionally, highly reducing polyketide synthase; part of the gene cluster that mediates the biosynthesis of phomenoic acid, a long chain aliphatic carboxylic acid that does not appear to be essential for pathogenicity but may play a role in allowing to outcompete other fungi in the environmental niche via its antifungal properties. The polyketide synthase produces the long methylated aliphatic carboxylic acid chain of phomenoic acid. The cluster-specific cytochrome P450 monooxygenase may then hydroxylate the methyl group of carbon 31. The putative dehydrogenase YogA, which has no obvious role in phomenoic acid biosynthesis, may further modify phomenoic acid to produce a compound not identified yet. This is Highly reducing polyketide synthase PKS2 from Leptosphaeria maculans (strain JN3 / isolate v23.1.3 / race Av1-4-5-6-7-8) (Blackleg fungus).